Reading from the N-terminus, the 416-residue chain is UDP-N-acetylglucosamine 1-carboxyvinyltransferase (416 aa).

22–23 provides a ligand contact to phosphoenolpyruvate; that stretch reads KN. Arginine 92 provides a ligand contact to UDP-N-acetyl-alpha-D-glucosamine. Residue cysteine 116 is the Proton donor of the active site. Cysteine 116 is modified (2-(S-cysteinyl)pyruvic acid O-phosphothioketal). 2 residues coordinate UDP-N-acetyl-alpha-D-glucosamine: aspartate 304 and isoleucine 326.

It belongs to the EPSP synthase family. MurA subfamily.

Its subcellular location is the cytoplasm. It catalyses the reaction phosphoenolpyruvate + UDP-N-acetyl-alpha-D-glucosamine = UDP-N-acetyl-3-O-(1-carboxyvinyl)-alpha-D-glucosamine + phosphate. Its pathway is cell wall biogenesis; peptidoglycan biosynthesis. Functionally, cell wall formation. Adds enolpyruvyl to UDP-N-acetylglucosamine. The sequence is that of UDP-N-acetylglucosamine 1-carboxyvinyltransferase from Solidesulfovibrio magneticus (strain ATCC 700980 / DSM 13731 / RS-1) (Desulfovibrio magneticus).